The following is a 160-amino-acid chain: Eukaryotic translation initiation factor 5A (160 aa).

A compositionally biased stretch (basic and acidic residues) spans M1 to A12. A disordered region spans residues M1 to P21. The residue at position 52 (K52) is a Hypusine.

Belongs to the eIF-5A family. Post-translationally, lys-53 undergoes hypusination, a unique post-translational modification that consists in the addition of a butylamino group from spermidine to lysine side chain, leading to the formation of the unusual amino acid hypusine. eIF-5As are the only known proteins to undergo this modification, which is essential for their function.

Functionally, translation factor that promotes translation elongation and termination, particularly upon ribosome stalling at specific amino acid sequence contexts. Binds between the exit (E) and peptidyl (P) site of the ribosome and promotes rescue of stalled ribosome: specifically required for efficient translation of polyproline-containing peptides as well as other motifs that stall the ribosome. Acts as a ribosome quality control (RQC) cofactor by joining the RQC complex to facilitate peptidyl transfer during CAT tailing step. This Manihot esculenta (Cassava) protein is Eukaryotic translation initiation factor 5A.